A 76-amino-acid polypeptide reads, in one-letter code: Small ribosomal subunit protein bS18 (76 aa).

It belongs to the bacterial ribosomal protein bS18 family. Part of the 30S ribosomal subunit. Forms a tight heterodimer with protein bS6.

Functionally, binds as a heterodimer with protein bS6 to the central domain of the 16S rRNA, where it helps stabilize the platform of the 30S subunit. This Xanthomonas campestris pv. campestris (strain 8004) protein is Small ribosomal subunit protein bS18.